The sequence spans 66 residues: Large ribosomal subunit protein uL29 (66 aa).

It belongs to the universal ribosomal protein uL29 family.

This Helicobacter pylori (strain J99 / ATCC 700824) (Campylobacter pylori J99) protein is Large ribosomal subunit protein uL29 (rpmC).